The following is a 319-amino-acid chain: F-box only protein 8 (319 aa).

The F-box domain occupies 68–111 (FINLEMLPPELSFTILSYLNATDLCLASCVWQDLANDELLWQGL). Residues 146 to 276 (FNANPDEGVN…LILLSIDLTS (131 aa)) form the SEC7 domain.

Its function is as follows. May promote guanine-nucleotide exchange on an ARF. Promotes the activation of ARF through replacement of GDP with GTP (Potential). This chain is F-box only protein 8 (FBXO8), found in Homo sapiens (Human).